The chain runs to 854 residues: Envelope glycoprotein gp160 (854 aa).

The N-terminal stretch at 1-31 is a signal peptide; that stretch reads MKVMEKKKRDWNSLSIITIITIILLTPCLTS. Residues 32–675 are Extracellular-facing; the sequence is ELWVTVYYGV…ITKWLWYIKI (644 aa). 6 disulfide bridges follow: Cys53-Cys73, Cys118-Cys203, Cys125-Cys194, Cys130-Cys155, Cys216-Cys245, and Cys226-Cys237. A V1 region spans residues 130–154; the sequence is CSKANFSQAKNLTNQTSSPPLEMKN. N-linked (GlcNAc...) asparagine; by host glycans are attached at residues Asn134, Asn140, Asn143, Asn154, Asn158, Asn186, and Asn195. The interval 155–194 is V2; sequence CSFNVTTELRDKKKQVYSLFYVEDVVNLGNENNTYRIINC. Residues Asn239, Asn260, Asn267, Asn274, Asn299, Asn331, Asn336, Asn351, and Asn356 are each glycosylated (N-linked (GlcNAc...) asparagine; by host). The V3 stretch occupies residues 294–327; sequence CHRPGNNTRGEVQIGPGMTFYNIENVVGDTRSAY. Cys294 and Cys328 are oxidised to a cystine. The segment at 362–372 is CD4-binding loop; the sequence is ASGGDPEVTHH. Disulfide bonds link Cys376–Cys429 and Cys383–Cys402. Residues 383-402 are V4; that stretch reads CNTSQIFTDNITNGIIILPC. 6 N-linked (GlcNAc...) asparagine; by host glycosylation sites follow: Asn384, Asn392, Asn426, Asn432, Asn446, and Asn450. 2 V5 regions span residues 445 to 456 and 447 to 456; these read TNNSGNLTFRPT and NSGNLTFRPT. The tract at residues 501-522 is fusion peptide; sequence AAFGLGALFLGFLGAAGSTMGA. Positions 564–582 are immunosuppression; the sequence is KQLQARLLAVERYLQDQQI. A disulfide bridge links Cys588 with Cys594. Residues Asn601, Asn608, Asn616, and Asn628 are each glycosylated (N-linked (GlcNAc...) asparagine; by host). A coiled-coil region spans residues 624–658; it reads KLVSNYTGKIFGLLEEAQSQQEKNERDLLELDQWA. Residues 653–674 are MPER; binding to GalCer; that stretch reads ELDQWASLWNWFDITKWLWYIK. Residues 676 to 696 traverse the membrane as a helical segment; it reads FLMAVGGIIGLRIIMTVFSVV. Residues 697 to 854 lie on the Cytoplasmic side of the membrane; the sequence is RRVRQGYSPL…IRQGLERALL (158 aa). Residues 703 to 706 carry the YXXL motif; contains endocytosis signal motif; that stretch reads YSPL. The Di-leucine internalization motif motif lies at 853–854; that stretch reads LL.

Belongs to the HIV-1 env protein family. As to quaternary structure, the mature envelope protein (Env) consists of a homotrimer of non-covalently associated gp120-gp41 heterodimers. The resulting complex protrudes from the virus surface as a spike. There seems to be as few as 10 spikes on the average virion. Interacts with host CD4, CCR5 and CXCR4. Gp120 also interacts with the C-type lectins CD209/DC-SIGN and CLEC4M/DC-SIGNR (collectively referred to as DC-SIGN(R)). Gp120 and gp41 interact with GalCer. Gp120 interacts with host ITGA4/ITGB7 complex; on CD4+ T-cells, this interaction results in rapid activation of integrin ITGAL/LFA-1, which facilitates efficient cell-to-cell spreading of HIV-1. Gp120 interacts with cell-associated heparan sulfate; this interaction increases virus infectivity on permissive cells and may be involved in infection of CD4- cells. In terms of assembly, the mature envelope protein (Env) consists of a homotrimer of non-covalently associated gp120-gp41 heterodimers. The resulting complex protrudes from the virus surface as a spike. There seems to be as few as 10 spikes on the average virion. Highly glycosylated by host. The high number of glycan on the protein is reffered to as 'glycan shield' because it contributes to hide protein sequence from adaptive immune system. In terms of processing, palmitoylation of the transmembrane protein and of Env polyprotein (prior to its proteolytic cleavage) is essential for their association with host cell membrane lipid rafts. Palmitoylation is therefore required for envelope trafficking to classical lipid rafts, but not for viral replication. Post-translationally, specific enzymatic cleavages in vivo yield mature proteins. Envelope glycoproteins are synthesized as an inactive precursor that is heavily N-glycosylated and processed likely by host cell furin in the Golgi to yield the mature SU and TM proteins. The cleavage site between SU and TM requires the minimal sequence [KR]-X-[KR]-R. About 2 of the 9 disulfide bonds of gp41 are reduced by P4HB/PDI, following binding to CD4 receptor.

The protein resides in the virion membrane. It localises to the host cell membrane. The protein localises to the host endosome membrane. Attaches the virus to the host lymphoid cell by binding to the primary receptor CD4. This interaction induces a structural rearrangement creating a high affinity binding site for a chemokine coreceptor like CXCR4 and/or CCR5. Acts as a ligand for CD209/DC-SIGN and CLEC4M/DC-SIGNR, which are respectively found on dendritic cells (DCs), and on endothelial cells of liver sinusoids and lymph node sinuses. These interactions allow capture of viral particles at mucosal surfaces by these cells and subsequent transmission to permissive cells. HIV subverts the migration properties of dendritic cells to gain access to CD4+ T-cells in lymph nodes. Virus transmission to permissive T-cells occurs either in trans (without DCs infection, through viral capture and transmission), or in cis (following DCs productive infection, through the usual CD4-gp120 interaction), thereby inducing a robust infection. In trans infection, bound virions remain infectious over days and it is proposed that they are not degraded, but protected in non-lysosomal acidic organelles within the DCs close to the cell membrane thus contributing to the viral infectious potential during DCs' migration from the periphery to the lymphoid tissues. On arrival at lymphoid tissues, intact virions recycle back to DCs' cell surface allowing virus transmission to CD4+ T-cells. Its function is as follows. Acts as a class I viral fusion protein. Under the current model, the protein has at least 3 conformational states: pre-fusion native state, pre-hairpin intermediate state, and post-fusion hairpin state. During fusion of viral and target intracellular membranes, the coiled coil regions (heptad repeats) assume a trimer-of-hairpins structure, positioning the fusion peptide in close proximity to the C-terminal region of the ectodomain. The formation of this structure appears to drive apposition and subsequent fusion of viral and target cell membranes. Complete fusion occurs in host cell endosomes and is dynamin-dependent, however some lipid transfer might occur at the plasma membrane. The virus undergoes clathrin-dependent internalization long before endosomal fusion, thus minimizing the surface exposure of conserved viral epitopes during fusion and reducing the efficacy of inhibitors targeting these epitopes. Membranes fusion leads to delivery of the nucleocapsid into the cytoplasm. Functionally, oligomerizes in the host endoplasmic reticulum into predominantly trimers. In a second time, gp160 transits in the host Golgi, where glycosylation is completed. The precursor is then proteolytically cleaved in the trans-Golgi and thereby activated by cellular furin or furin-like proteases to produce gp120 and gp41. The sequence is that of Envelope glycoprotein gp160 from Pan (chimpanzees).